The sequence spans 702 residues: Elongation factor G 2 (702 aa).

In terms of domain architecture, tr-type G spans 8-291 (ELYRNIGIVA…AVIDYLPAPS (284 aa)). GTP-binding positions include 17–24 (AHVDAGKT), 89–93 (DTPGH), and 143–146 (NKMD). Positions 293–314 (IPAIRGTDPDDEEKHDERHADD) are disordered.

It belongs to the TRAFAC class translation factor GTPase superfamily. Classic translation factor GTPase family. EF-G/EF-2 subfamily.

The protein resides in the cytoplasm. Its function is as follows. Catalyzes the GTP-dependent ribosomal translocation step during translation elongation. During this step, the ribosome changes from the pre-translocational (PRE) to the post-translocational (POST) state as the newly formed A-site-bound peptidyl-tRNA and P-site-bound deacylated tRNA move to the P and E sites, respectively. Catalyzes the coordinated movement of the two tRNA molecules, the mRNA and conformational changes in the ribosome. This Pseudomonas aeruginosa (strain ATCC 15692 / DSM 22644 / CIP 104116 / JCM 14847 / LMG 12228 / 1C / PRS 101 / PAO1) protein is Elongation factor G 2 (fusB).